We begin with the raw amino-acid sequence, 86 residues long: HssA/B-like protein 60 (86 aa).

The disordered stretch occupies residues 11–33 (GNIKSSSKSNIASSSSSSSSQSL).

This sequence belongs to the hssA/B family.

The sequence is that of HssA/B-like protein 60 (hssl60) from Dictyostelium discoideum (Social amoeba).